The following is a 466-amino-acid chain: Tissue alpha-L-fucosidase (466 aa).

The signal sequence occupies residues 1–31; the sequence is MRAPGMRSRPAGPALLLLLLFLGAAESVRRA. T170 carries the post-translational modification Phosphothreonine. Residues N241, N268, and N382 are each glycosylated (N-linked (GlcNAc...) asparagine).

It belongs to the glycosyl hydrolase 29 family. In terms of assembly, homotetramer.

It localises to the lysosome. It catalyses the reaction an alpha-L-fucoside + H2O = L-fucose + an alcohol. The enzyme catalyses a neolactoside IV(2)-alpha-Fuc-nLc4Cer(d18:1(4E)) + H2O = a neolactoside nLc4Cer(d18:1(4E)) + L-fucose. It carries out the reaction a neolactoside IV(2)-alpha-Fuc-nLc4Cer(d18:0) + H2O = a neolactoside nLc4Cer(d18:0) + L-fucose. Functionally, alpha-L-fucosidase is responsible for hydrolyzing the alpha-1,6-linked fucose joined to the reducing-end N-acetylglucosamine of the carbohydrate moieties of glycoproteins. This is Tissue alpha-L-fucosidase from Homo sapiens (Human).